The primary structure comprises 304 residues: uncharacterized protein (304 aa).

The span at 1-10 shows a compositional bias: basic residues; that stretch reads MLWAHRKKRK. Residues 1–28 form a disordered region; the sequence is MLWAHRKKRKAATETTEDKPLESHRAND. The span at 16 to 27 shows a compositional bias: basic and acidic residues; the sequence is TEDKPLESHRAN. At Ser-39 the chain carries Phosphoserine. The segment covering 91–101 has biased composition (polar residues); that stretch reads KQKISGSSMTK. Disordered stretches follow at residues 91–115, 138–160, and 190–304; these read KQKI…SMED, SMLQ…ISPE, and SHTV…IYGS. Basic and acidic residues predominate over residues 151 to 160; the sequence is HAESRNISPE. A Phosphoserine modification is found at Ser-158. Residues 195–206 are compositionally biased toward low complexity; sequence SQSRHSNQSHHS. Residues 208 to 223 show a composition bias toward polar residues; the sequence is PSHQSNQSHPVYSSYQ. The segment covering 229-248 has biased composition (low complexity); it reads HLSPQSYPSYSSHQSHPGHS. Residues 249-263 show a composition bias toward polar residues; it reads NHQGHSGLSSHQTHL. The span at 264 to 292 shows a compositional bias: low complexity; the sequence is GHSNHQGHPGHSSHQSHQGQPGHPSHQSH.

This is an uncharacterized protein from Mus musculus (Mouse).